Consider the following 65-residue polypeptide: MADVKFVKPKNINGHFVKIKCRDCGNVQVVFARPSSTVTCNICGATIAKPTGGILATSGEVVEVL.

Zn(2+) is bound by residues cysteine 21, cysteine 24, cysteine 40, and cysteine 43. The segment at 21 to 43 adopts a C4-type zinc-finger fold; sequence CRDCGNVQVVFARPSSTVTCNIC.

It belongs to the eukaryotic ribosomal protein eS27 family. Part of the 30S ribosomal subunit. Requires Zn(2+) as cofactor.

The chain is Small ribosomal subunit protein eS27 from Thermoplasma acidophilum (strain ATCC 25905 / DSM 1728 / JCM 9062 / NBRC 15155 / AMRC-C165).